Reading from the N-terminus, the 239-residue chain is LexA repressor (239 aa).

Positions 26–46 form a DNA-binding region, H-T-H motif; it reads FDEMKDALDLKSKSGIHRLIT. Catalysis depends on for autocatalytic cleavage activity residues Ser-160 and Lys-198.

Belongs to the peptidase S24 family. Homodimer.

It catalyses the reaction Hydrolysis of Ala-|-Gly bond in repressor LexA.. Its function is as follows. Represses a number of genes involved in the response to DNA damage (SOS response), including recA and lexA. In the presence of single-stranded DNA, RecA interacts with LexA causing an autocatalytic cleavage which disrupts the DNA-binding part of LexA, leading to derepression of the SOS regulon and eventually DNA repair. The sequence is that of LexA repressor from Methylobacterium sp. (strain 4-46).